A 150-amino-acid polypeptide reads, in one-letter code: UPF0178 protein Bpet3884 (150 aa).

It belongs to the UPF0178 family.

The chain is UPF0178 protein Bpet3884 from Bordetella petrii (strain ATCC BAA-461 / DSM 12804 / CCUG 43448).